The chain runs to 110 residues: MSMTDLLHAEDIKKAVGAFTAVDSFDHKKFFQMVGLKKKSPEDVKKVFHILDKDKSGFIEEEELGFILKGFSPDARDLSVKETKTLLAAGDKDGDGKIGADEFSTLVAES.

S2 is subject to N-acetylserine. Residues S2 and S24 each carry the phosphoserine modification. 2 consecutive EF-hand domains span residues 39–74 and 78–110; these read KSPE…FSPD and LSVK…VAES. Ca(2+)-binding residues include D52, D54, S56, F58, E60, E63, D91, D93, D95, K97, and E102.

It belongs to the parvalbumin family.

Its function is as follows. In muscle, parvalbumin is thought to be involved in relaxation after contraction. It binds two calcium ions. The polypeptide is Parvalbumin alpha (PVALB) (Bos taurus (Bovine)).